A 325-amino-acid polypeptide reads, in one-letter code: Mitochondrial thiamine pyrophosphate carrier 1 (325 aa).

Solcar repeat units lie at residues G12 to L111, P122 to H209, and P216 to F312. The next 6 membrane-spanning stretches (helical) occupy residues V17–L35, L92–T108, S127–Y143, V184–F200, V223–L239, and G287–W304.

Belongs to the mitochondrial carrier (TC 2.A.29) family.

It is found in the mitochondrion inner membrane. Mitochondrial transporter that mediates uptake of thiamine pyrophosphate (ThPP) into mitochondria. The polypeptide is Mitochondrial thiamine pyrophosphate carrier 1 (TPC1) (Chaetomium globosum (strain ATCC 6205 / CBS 148.51 / DSM 1962 / NBRC 6347 / NRRL 1970) (Soil fungus)).